The sequence spans 147 residues: MALKRIHKELNDLARDPPAQCSAGPVGDDMFHWQATIMGPNDSPYQGGVFFLTIHFPTDYPFKPPKVAFTTRIYHPNINSNGSICLDILRSQWSPALTISKVLLSICSLLCDPNPDDPLVPEIARIYKTDREKYNRIAREWTQKYAM.

The 147-residue stretch at Met-1 to Met-147 folds into the UBC core domain. Cys-85 acts as the Glycyl thioester intermediate in catalysis.

Belongs to the ubiquitin-conjugating enzyme family. As to quaternary structure, interacts with SCF (SKP1-CUL1-F-box protein) E3 ubiquitin ligase complex. Interacts with CNOT4 (via RING domain). Interacts with E3 ubiquitin-protein ligases CBLC, PJA1 and PJA2. Interacts with PDZRN3. Interacts with PPP1R11. Interacts with E3 ubiquitin-protein ligase PHF7; the interaction inhibits cleavage of PHF7 and promotes association of the complex with the nucleosome core particle.

It carries out the reaction S-ubiquitinyl-[E1 ubiquitin-activating enzyme]-L-cysteine + [E2 ubiquitin-conjugating enzyme]-L-cysteine = [E1 ubiquitin-activating enzyme]-L-cysteine + S-ubiquitinyl-[E2 ubiquitin-conjugating enzyme]-L-cysteine.. It catalyses the reaction S-ubiquitinyl-[E1 ubiquitin-activating enzyme]-L-cysteine + [acceptor protein]-L-lysine = [E1 ubiquitin-activating enzyme]-L-cysteine + N(6)-monoubiquitinyl-[acceptor protein]-L-lysine.. It functions in the pathway protein modification; protein ubiquitination. In terms of biological role, accepts ubiquitin from the E1 complex and catalyzes its covalent attachment to other proteins. In vitro catalyzes 'Lys-48'-linked polyubiquitination. Mediates the selective degradation of short-lived and abnormal proteins. Functions in the E6/E6-AP-induced ubiquitination of p53/TP53. Mediates ubiquitination of PEX5 and SQSTM1 and autoubiquitination of STUB1 and TRAF6. Involved in the signal-induced conjugation and subsequent degradation of NFKBIA, FBXW2-mediated GCM1 ubiquitination and degradation, MDM2-dependent degradation of p53/TP53 and the activation of MAVS in the mitochondria by RIGI in response to viral infection. Essential for viral activation of IRF3. The protein is Ubiquitin-conjugating enzyme E2 D2 (UBE2D2) of Bos taurus (Bovine).